A 109-amino-acid chain; its full sequence is Large ribosomal subunit protein eL30 (109 aa).

It belongs to the eukaryotic ribosomal protein eL30 family.

The protein is Large ribosomal subunit protein eL30 (RPL30) of Yarrowia lipolytica (strain CLIB 122 / E 150) (Yeast).